The chain runs to 257 residues: RLA class II histocompatibility antigen, DP beta chain (257 aa).

A signal peptide spans 1–29; it reads MRPCRSLRTAALAVVLTVLLHPVALGRAT. The segment at 30-120 is beta-1; that stretch reads PGESEQNYLW…LFQGLPVLLQ (91 aa). At 30-224 the chain is on the extracellular side; the sequence is PGESEQNYLW…KAQSDSARSK (195 aa). Intrachain disulfides connect Cys45-Cys105 and Cys143-Cys199. Asn49 carries an N-linked (GlcNAc...) asparagine glycan. The beta-2 stretch occupies residues 121–214; the sequence is TQPRVSVSPS…SLDSPITVEW (94 aa). The 89-residue stretch at 123–211 folds into the Ig-like C1-type domain; the sequence is PRVSVSPSKK…EHPSLDSPIT (89 aa). Positions 215 to 224 are connecting peptide; that stretch reads KAQSDSARSK. A helical membrane pass occupies residues 225-245; it reads MLAGVGGLVLGLVSLAVGVFM. The Cytoplasmic portion of the chain corresponds to 246 to 257; the sequence is HRRSKKAQQGCR.

It belongs to the MHC class II family.

It is found in the membrane. In Oryctolagus cuniculus (Rabbit), this protein is RLA class II histocompatibility antigen, DP beta chain.